Consider the following 324-residue polypeptide: MMTSMEGMVEKGVLDDIIRRLLEGKGGKQVQLSESEIRQLCFNARQIFLSQPNLLDLHAPIRICGDIHGQYQDLLRLFEYGGYPPSANYLFLGDYVDRGKQSLETICLLLAYKIRYPSKIYLLRGNHEDAKINRIYGFYDECKRRFNVRLWKVFTDCFNCLPVAALIDEKILCMHGGLSPDLDNLNQIREIQRPIEIPDSGLLCDLLWSDPDQKIEGWADSDRGISCTFGADKVAEFLDKNDLDLICRGHQVVEDGYEFFAKRRLVTIFSAPNYGGEFDNAGALLSVDESLVCSFEIMKPAPASSSHPLKKDFHNRTLGYNLSA.

4 residues coordinate Mn(2+): aspartate 66, histidine 68, aspartate 94, and asparagine 126. The active-site Proton donor is histidine 127. Residues histidine 175 and histidine 250 each coordinate Mn(2+).

The protein belongs to the PPP phosphatase family. PP-1 subfamily. Mn(2+) serves as cofactor. In terms of tissue distribution, expressed in roots, rosettes and flowers.

It is found in the nucleus. The protein resides in the cytoplasm. The enzyme catalyses O-phospho-L-seryl-[protein] + H2O = L-seryl-[protein] + phosphate. It carries out the reaction O-phospho-L-threonyl-[protein] + H2O = L-threonyl-[protein] + phosphate. With respect to regulation, phosphatase activity is strongly reduced by the protein phosphatase inhibitor 2 (I-2). Its function is as follows. Serine/threonine-protein phosphatase that possesses phosphatase activity toward para-nitrophenyl phosphate (pNPP) in vitro. The sequence is that of Serine/threonine-protein phosphatase PP1 isozyme 8 from Arabidopsis thaliana (Mouse-ear cress).